We begin with the raw amino-acid sequence, 381 residues long: Alkanesulfonate monooxygenase (381 aa).

Belongs to the SsuD family. In terms of assembly, homotetramer.

It catalyses the reaction an alkanesulfonate + FMNH2 + O2 = an aldehyde + FMN + sulfite + H2O + 2 H(+). Its function is as follows. Catalyzes the desulfonation of aliphatic sulfonates. The chain is Alkanesulfonate monooxygenase from Escherichia coli (strain SE11).